The primary structure comprises 514 residues: Type-2 serine--tRNA ligase (514 aa).

Alanine 313 is an L-serine binding site. Zn(2+) is bound at residue cysteine 315. An L-serine-binding site is contributed by arginine 344. ATP-binding positions include arginine 344–glutamate 346 and arginine 355–valine 356. Arginine 361–glutamate 363 is a binding site for L-serine. Zn(2+) is bound by residues glutamate 363 and cysteine 470. Arginine 477 lines the ATP pocket.

Belongs to the class-II aminoacyl-tRNA synthetase family. Type-2 seryl-tRNA synthetase subfamily. In terms of assembly, homodimer. It depends on Zn(2+) as a cofactor.

It localises to the cytoplasm. It catalyses the reaction tRNA(Ser) + L-serine + ATP = L-seryl-tRNA(Ser) + AMP + diphosphate + H(+). The catalysed reaction is tRNA(Sec) + L-serine + ATP = L-seryl-tRNA(Sec) + AMP + diphosphate + H(+). Its pathway is aminoacyl-tRNA biosynthesis; selenocysteinyl-tRNA(Sec) biosynthesis; L-seryl-tRNA(Sec) from L-serine and tRNA(Sec): step 1/1. Catalyzes the attachment of serine to tRNA(Ser). Is also able to aminoacylate tRNA(Sec) with serine, to form the misacylated tRNA L-seryl-tRNA(Sec), which will be further converted into selenocysteinyl-tRNA(Sec). The protein is Type-2 serine--tRNA ligase (serS) of Methanococcus maripaludis (strain DSM 14266 / JCM 13030 / NBRC 101832 / S2 / LL).